We begin with the raw amino-acid sequence, 384 residues long: N-acetyldiaminopimelate deacetylase (384 aa).

Residue D74 is part of the active site. The active-site Proton acceptor is the E133.

The protein belongs to the peptidase M20A family. N-acetyldiaminopimelate deacetylase subfamily.

The catalysed reaction is N-acetyl-(2S,6S)-2,6-diaminopimelate + H2O = (2S,6S)-2,6-diaminopimelate + acetate. Its pathway is amino-acid biosynthesis; L-lysine biosynthesis via DAP pathway; LL-2,6-diaminopimelate from (S)-tetrahydrodipicolinate (acetylase route): step 3/3. In terms of biological role, catalyzes the conversion of N-acetyl-diaminopimelate to diaminopimelate and acetate. In Lactiplantibacillus plantarum (strain ATCC BAA-793 / NCIMB 8826 / WCFS1) (Lactobacillus plantarum), this protein is N-acetyldiaminopimelate deacetylase.